The chain runs to 423 residues: AP-1 complex subunit mu-2 (423 aa).

The region spanning 168-421 (KNEVFIDVIE…ITQSGDYQLR (254 aa)) is the MHD domain.

Belongs to the adaptor complexes medium subunit family. As to quaternary structure, adaptor protein complex 1 (AP-1) is a heterotetramer composed of two large adaptins (gamma-type subunit AP1G1 and beta-type subunit AP1B1), a medium adaptin (mu-type subunit AP1M1 or AP1M2) and a small adaptin (sigma-type subunit AP1S1 or AP1S2 or AP1S3). Interacts with P2X4. In terms of processing, phosphorylation of membrane-bound AP1M1/AP1M2 increases its affinity for sorting signals.

The protein resides in the golgi apparatus. It is found in the cytoplasmic vesicle. It localises to the clathrin-coated vesicle membrane. Its function is as follows. Subunit of clathrin-associated adaptor protein complex 1 that plays a role in protein sorting in the trans-Golgi network (TGN) and endosomes. The AP complexes mediate the recruitment of clathrin to membranes and the recognition of sorting signals within the cytosolic tails of transmembrane cargo molecules. This chain is AP-1 complex subunit mu-2 (Ap1m2), found in Mus musculus (Mouse).